A 69-amino-acid polypeptide reads, in one-letter code: DNA gyrase inhibitor YacG (69 aa).

Positions 13, 16, 32, and 36 each coordinate Zn(2+).

It belongs to the DNA gyrase inhibitor YacG family. As to quaternary structure, interacts with GyrB. It depends on Zn(2+) as a cofactor.

Functionally, inhibits all the catalytic activities of DNA gyrase by preventing its interaction with DNA. Acts by binding directly to the C-terminal domain of GyrB, which probably disrupts DNA binding by the gyrase. The protein is DNA gyrase inhibitor YacG of Neisseria meningitidis serogroup B (strain ATCC BAA-335 / MC58).